The primary structure comprises 1678 residues: Hispidin synthase (1678 aa).

The adenylation (A) domain stretch occupies residues 33–453 (GEHRWSYREL…WLGRNTDFIQ (421 aa)). The Carrier 1 domain occupies 586-661 (DELSNTVKHI…SLSNAVYAKL (76 aa)). Serine 620 is modified (O-(pantetheine 4'-phosphoryl)serine). The 426-residue stretch at 683–1108 (GKEIVVVGQA…GTLGGIVLEA (426 aa)) folds into the Ketosynthase family 3 (KS3) domain. Catalysis depends on for beta-ketoacyl synthase activity residues cysteine 852, histidine 988, and histidine 1029. The segment at 1201–1499 (YKRGALAFAF…VAWSLLLSNG (299 aa)) is malonyl-CoA:ACP transacylase (MAT) domain. Residues 1562-1582 (EETLSSGSSTPTLENTDLDSG) form a disordered region. Positions 1564–1576 (TLSSGSSTPTLEN) are enriched in polar residues. The 76-residue stretch at 1597–1672 (DDLRDSIVSS…EMVSNLVEQA (76 aa)) folds into the Carrier 2 domain. Serine 1632 carries the post-translational modification O-(pantetheine 4'-phosphoryl)serine.

In the N-terminal section; belongs to the NRP synthetase family.

It carries out the reaction (E)-caffeate + 2 malonyl-CoA + ATP + H(+) = hispidin + AMP + 2 CO2 + diphosphate + 2 CoA. The protein operates within secondary metabolite biosynthesis. Its function is as follows. PKS-NRPS hybrid synthetase; part of the gene cluster that mediates the fungal bioluminescence cycle. Performs the biosynthesis of hispidin from caffeic acid by two cycles of addition of malonyl units followed by lactonization. The fungal bioluminescence cycle begins with the hispidin synthetase that catalyzes the formation of hispidin which is further hydroxylated by the hispidin-3-hydroxylase, yielding the fungal luciferin 3-hydroxyhispidin. The luciferase then produces an endoperoxide as a high-energy intermediate with decomposition that yields oxyluciferin (also known as caffeoylpyruvate) and light emission. Oxyluciferin can be recycled to caffeic acid by caffeoylpyruvate hydrolase. The chain is Hispidin synthase from Neonothopanus nambi (Agaricus nambi).